Here is a 220-residue protein sequence, read N- to C-terminus: Putative pyrophosphatase PpaX (220 aa).

Catalysis depends on Asp9, which acts as the Nucleophile.

The protein belongs to the HAD-like hydrolase superfamily. PpaX family. Mg(2+) serves as cofactor.

It catalyses the reaction diphosphate + H2O = 2 phosphate + H(+). The chain is Putative pyrophosphatase PpaX from Caldanaerobacter subterraneus subsp. tengcongensis (strain DSM 15242 / JCM 11007 / NBRC 100824 / MB4) (Thermoanaerobacter tengcongensis).